The following is a 151-amino-acid chain: Large ribosomal subunit protein bL28c (151 aa).

The N-terminal 74 residues, methionine 1 to alanine 74, are a transit peptide targeting the chloroplast.

Belongs to the bacterial ribosomal protein bL28 family. Part of the 50S ribosomal subunit.

The protein localises to the plastid. It is found in the chloroplast. This Nicotiana tabacum (Common tobacco) protein is Large ribosomal subunit protein bL28c (RPL28).